Here is a 283-residue protein sequence, read N- to C-terminus: Bifunctional protein FolD (283 aa).

Residues 164 to 166 (GRS), Ser-189, and Ile-230 each bind NADP(+).

It belongs to the tetrahydrofolate dehydrogenase/cyclohydrolase family. In terms of assembly, homodimer.

The enzyme catalyses (6R)-5,10-methylene-5,6,7,8-tetrahydrofolate + NADP(+) = (6R)-5,10-methenyltetrahydrofolate + NADPH. It catalyses the reaction (6R)-5,10-methenyltetrahydrofolate + H2O = (6R)-10-formyltetrahydrofolate + H(+). It functions in the pathway one-carbon metabolism; tetrahydrofolate interconversion. In terms of biological role, catalyzes the oxidation of 5,10-methylenetetrahydrofolate to 5,10-methenyltetrahydrofolate and then the hydrolysis of 5,10-methenyltetrahydrofolate to 10-formyltetrahydrofolate. The polypeptide is Bifunctional protein FolD (Lacticaseibacillus casei (strain BL23) (Lactobacillus casei)).